A 127-amino-acid polypeptide reads, in one-letter code: uncharacterized protein (127 aa).

A run of 3 helical transmembrane segments spans residues 16-36 (AVIG…CYVI), 59-79 (LVGA…SFLF), and 100-120 (IIGF…GGVI).

Its subcellular location is the cell membrane. This is an uncharacterized protein from Methanocaldococcus jannaschii (strain ATCC 43067 / DSM 2661 / JAL-1 / JCM 10045 / NBRC 100440) (Methanococcus jannaschii).